Reading from the N-terminus, the 246-residue chain is Small ribosomal subunit protein uS3 (246 aa).

Residues 23-94 (LNEFLTRELA…RIELYAEKVA (72 aa)) enclose the KH type-2 domain. The disordered stretch occupies residues 201–246 (GPKKPLPDNVSVVEPKEEKIYETPETEYKIPPPSKPLDDLSEAKVL). Composition is skewed to basic and acidic residues over residues 214–228 (EPKEEKIYETPETEY) and 236–246 (PLDDLSEAKVL). Residues Thr-223 and Thr-226 each carry the phosphothreonine modification. Ser-241 bears the Phosphoserine mark.

Belongs to the universal ribosomal protein uS3 family. As to quaternary structure, interacts with LTV1; the interaction is RNA-independent.

The protein resides in the cytoplasm. It is found in the nucleus. Has DNA repair activity directed towards the mutagenic lesions 8-oxoguanine and abasic sites in DNA. It can cleave DNA containing 8-oxoguanine residues efficiently. Also acts as an ap lyase, cleaving phosphodiester bonds via a beta,delta elimination reaction. The sequence is that of Small ribosomal subunit protein uS3 (RpS3) from Drosophila melanogaster (Fruit fly).